The primary structure comprises 65 residues: Defensin-B3 (65 aa).

Residues Met-1–Ser-21 form the signal peptide. 3 cysteine pairs are disulfide-bonded: Cys-29-Cys-58, Cys-36-Cys-50, and Cys-40-Cys-59. Residues Glu-62–Arg-65 constitute a propeptide that is removed on maturation.

This sequence belongs to the beta-defensin family. In terms of tissue distribution, lowly expressed in spleen, and expressed at lower levels in kidney, lung and testis.

The protein localises to the secreted. In terms of biological role, has antimicrobial activity. The chain is Defensin-B3 from Ornithorhynchus anatinus (Duckbill platypus).